Consider the following 290-residue polypeptide: Bifunctional protein FolD 1 (290 aa).

Residues 172–174 and isoleucine 238 each bind NADP(+); that span reads GAS.

This sequence belongs to the tetrahydrofolate dehydrogenase/cyclohydrolase family. As to quaternary structure, homodimer.

The catalysed reaction is (6R)-5,10-methylene-5,6,7,8-tetrahydrofolate + NADP(+) = (6R)-5,10-methenyltetrahydrofolate + NADPH. It carries out the reaction (6R)-5,10-methenyltetrahydrofolate + H2O = (6R)-10-formyltetrahydrofolate + H(+). Its pathway is one-carbon metabolism; tetrahydrofolate interconversion. In terms of biological role, catalyzes the oxidation of 5,10-methylenetetrahydrofolate to 5,10-methenyltetrahydrofolate and then the hydrolysis of 5,10-methenyltetrahydrofolate to 10-formyltetrahydrofolate. The sequence is that of Bifunctional protein FolD 1 from Pseudomonas putida (strain GB-1).